The primary structure comprises 412 residues: Peptidase T (412 aa).

His81 provides a ligand contact to Zn(2+). Asp83 is an active-site residue. Asp144 contributes to the Zn(2+) binding site. Glu178 acts as the Proton acceptor in catalysis. 3 residues coordinate Zn(2+): Glu179, Asp201, and His383.

Belongs to the peptidase M20B family. Requires Zn(2+) as cofactor.

It localises to the cytoplasm. It catalyses the reaction Release of the N-terminal residue from a tripeptide.. In terms of biological role, cleaves the N-terminal amino acid of tripeptides. The protein is Peptidase T of Bacillus cereus (strain ZK / E33L).